Reading from the N-terminus, the 365-residue chain is MKLSALLALSASTAVLAAPAVHHSDNHHHNDKRAVVTVTQYVNADGAVVIPAATTATSAAADGKVESVAAATTTLSSTAAAATTSAAASSSSSSSSSSSSSSSVGSGDFEDGTISCSDFPSGQGAVSLDWLGLGGWASIMDMNGNTATSCQDGYYCSYACSPGYAKTQWPSEQPSDGRSVGGLYCKNGKLYRSNTDTNSLCVEGQGSAQAVNKVSGSIAICGTDYPGSENMVVPTVVGAGSSQPINVIKEDSYYQWQGKKTSAQYYVNNAGVSVEDGCIWGTEGSGVGNWAPVVLGAGYTDGITYLSIIPNPNNKEAPNFNIKIVATDGSTVNGACSYENGVYSGSGSDGCTVSVTSGSANFVFY.

An N-terminal signal peptide occupies residues 1–17 (MKLSALLALSASTAVLA).

This sequence belongs to the SUN family.

The protein localises to the mitochondrion outer membrane. Its subcellular location is the secreted. It is found in the cell wall. Its function is as follows. Involved in aging, oxidative stress response, and in the regulation of mitochondrial biogenesis. Inactivation of UTH1 increases life span, leads to higher resistance to heat stress and against hydrogen peroxide, and increases sensitivity to the superoxide radical-generating drug paraquat and to copper. Also required for the selective autophagic degradation of mitochondria (mitophagy) in response to nitrogen starvation. Involved in the remodeling of the cell wall during the various phases of yeast culture development and under various environmental conditions and plays a role in septation. Involved in cell sensitivity to boric acid. The chain is Probable secreted beta-glucosidase UTH1 (UTH1) from Saccharomyces cerevisiae (strain ATCC 204508 / S288c) (Baker's yeast).